We begin with the raw amino-acid sequence, 199 residues long: Female-specific protein transformer (199 aa).

Disordered stretches follow at residues 1–121 and 178–199; these read MDAD…RTPR and YRAG…QAPN. Over residues 20–37 the composition is skewed to basic and acidic residues; sequence REKMPYFADEVRERDRVR. Basic residues-rich tracts occupy residues 56-69, 77-92, and 102-119; these read RRSR…RSRT, CQRR…RSGS, and SRRR…RSRT.

The protein resides in the nucleus speckle. Functionally, member of the regulatory pathway controlling female somatic sexual differentiation, regulated by Sxl. Activates dsx female-specific splicing by promoting the formation of a splicing enhancer complex which consists of tra, tra2 and sr proteins. The protein is Female-specific protein transformer (tra) of Drosophila virilis (Fruit fly).